The sequence spans 537 residues: Bifunctional NAD(P)H-hydrate repair enzyme Nnr (537 aa).

The interval 1 to 227 is NAD(P)H-hydrate epimerase; that stretch reads MLGRPVFGLG…PPEAEVYVGP (227 aa). One can recognise a YjeF N-terminal domain in the interval 13–223; it reads ITSVDVAVID…SIGAPPEAEV (211 aa). Positions 65–69 are NADPHX 1; for epimerase activity; it reads GNGGD. 2 residues coordinate K(+): Asn-66 and Asp-135. An NADPHX 1; for epimerase activity region spans residues 139-145; sequence GTGLRGA. Residues Tyr-150 and Asp-168 each contribute to the (6S)-NADPHX site. Ser-171 provides a ligand contact to K(+). The YjeF C-terminal domain maps to 226–508; sequence GPGDVAYRVR…EKIPEALNNP (283 aa). The segment at 227–537 is ADP-dependent (S)-NAD(P)H-hydrate dehydratase; the sequence is PGDVAYRVRP…WQPPVGRSES (311 aa). Gly-329 is a binding site for (6S)-NADPHX. The segment at 381 to 387 is NADPHX 2; for dehydratase activity; it reads HQREFQI. Residues 421-425 and 440-449 contribute to the ADP site; these read KGPID and VPAMSVGGTG. Residue Asp-450 participates in (6S)-NADPHX binding.

In the N-terminal section; belongs to the NnrE/AIBP family. It in the C-terminal section; belongs to the NnrD/CARKD family. Requires K(+) as cofactor.

It carries out the reaction (6S)-NADHX + ADP = AMP + phosphate + NADH + H(+). The enzyme catalyses (6S)-NADPHX + ADP = AMP + phosphate + NADPH + H(+). The catalysed reaction is (6R)-NADHX = (6S)-NADHX. It catalyses the reaction (6R)-NADPHX = (6S)-NADPHX. Functionally, bifunctional enzyme that catalyzes the epimerization of the S- and R-forms of NAD(P)HX and the dehydration of the S-form of NAD(P)HX at the expense of ADP, which is converted to AMP. This allows the repair of both epimers of NAD(P)HX, a damaged form of NAD(P)H that is a result of enzymatic or heat-dependent hydration. The protein is Bifunctional NAD(P)H-hydrate repair enzyme Nnr (nnr) of Hyperthermus butylicus (strain DSM 5456 / JCM 9403 / PLM1-5).